The following is a 478-amino-acid chain: Centromere DNA-binding protein complex CBF3 subunit C (478 aa).

Residues 206–251 (EVGEEKDVDVSGANSDENSSPSSTIKNKKRSASKRSHSDNGNVGAT) are disordered. Over residues 217–230 (GANSDENSSPSSTI) the composition is skewed to polar residues. Residues 231 to 240 (KNKKRSASKR) are compositionally biased toward basic residues.

In terms of assembly, component of the CBF3 copmplex, which is formed of CBF3A/CBF2, CBF3B/CEP3, CBF3C/CTF13 and CBF3D. CBF3C interacts with CBF3D and SGT1.

It is found in the nucleus. Its subcellular location is the chromosome. The protein resides in the centromere. In terms of biological role, acts as a central component of the centromere DNA-binding protein complex CBF3, which is essential for chromosome segregation and movement of centromeres along microtubules. CBF3 is required for the recruitment of other kinetochore complexes to CEN DNA. It plays a role in the attachment of chromosomes to the spindle and binds selectively to a highly conserved DNA sequence called CDEIII, found in centromers and in several promoters. The association of CBF3C with CBF3D and SGT1 is required for CBF3C activation and CBF3 assembly. In Saccharomyces cerevisiae (strain ATCC 204508 / S288c) (Baker's yeast), this protein is Centromere DNA-binding protein complex CBF3 subunit C (CTF13).